Here is a 226-residue protein sequence, read N- to C-terminus: ATP synthase F(0) complex subunit a (226 aa).

The next 6 membrane-spanning stretches (helical) occupy residues 10 to 30 (ITPT…PPVI), 68 to 88 (WSLM…LGLL), 97 to 117 (QLSM…ILGF), 138 to 158 (IPML…ALAV), 164 to 184 (ITAG…LTSI), and 189 to 209 (AMIT…VALI).

It belongs to the ATPase A chain family. In terms of assembly, component of the ATP synthase complex composed at least of ATP5F1A/subunit alpha, ATP5F1B/subunit beta, ATP5MC1/subunit c (homooctomer), MT-ATP6/subunit a, MT-ATP8/subunit 8, ATP5ME/subunit e, ATP5MF/subunit f, ATP5MG/subunit g, ATP5MK/subunit k, ATP5MJ/subunit j, ATP5F1C/subunit gamma, ATP5F1D/subunit delta, ATP5F1E/subunit epsilon, ATP5PF/subunit F6, ATP5PB/subunit b, ATP5PD/subunit d, ATP5PO/subunit OSCP. ATP synthase complex consists of a soluble F(1) head domain (subunits alpha(3) and beta(3)) - the catalytic core - and a membrane F(0) domain - the membrane proton channel (subunits c, a, 8, e, f, g, k and j). These two domains are linked by a central stalk (subunits gamma, delta, and epsilon) rotating inside the F1 region and a stationary peripheral stalk (subunits F6, b, d, and OSCP). Interacts with DNAJC30; interaction is direct.

The protein resides in the mitochondrion inner membrane. The catalysed reaction is H(+)(in) = H(+)(out). Functionally, subunit a, of the mitochondrial membrane ATP synthase complex (F(1)F(0) ATP synthase or Complex V) that produces ATP from ADP in the presence of a proton gradient across the membrane which is generated by electron transport complexes of the respiratory chain. ATP synthase complex consist of a soluble F(1) head domain - the catalytic core - and a membrane F(1) domain - the membrane proton channel. These two domains are linked by a central stalk rotating inside the F(1) region and a stationary peripheral stalk. During catalysis, ATP synthesis in the catalytic domain of F(1) is coupled via a rotary mechanism of the central stalk subunits to proton translocation. With the subunit c (ATP5MC1), forms the proton-conducting channel in the F(0) domain, that contains two crucial half-channels (inlet and outlet) that facilitate proton movement from the mitochondrial intermembrane space (IMS) into the matrix. Protons are taken up via the inlet half-channel and released through the outlet half-channel, following a Grotthuss mechanism. The sequence is that of ATP synthase F(0) complex subunit a from Cricetulus griseus (Chinese hamster).